The following is a 379-amino-acid chain: L-lactate dehydrogenase (379 aa).

One can recognise an FMN hydroxy acid dehydrogenase domain in the interval 1–379; that stretch reads MIISASTDYR…LSRDSLVKIP (379 aa). Tyr24 serves as a coordination point for substrate. Residues Ser106 and Gln127 each coordinate FMN. Substrate is bound at residue Tyr129. Position 155 (Thr155) interacts with FMN. Residue Arg164 coordinates substrate. Position 251 (Lys251) interacts with FMN. His275 (proton acceptor) is an active-site residue. Residue Arg278 coordinates substrate. 306 to 330 is an FMN binding site; it reads DSGIRTGLDVVRMLALGADCTLLGR.

The protein belongs to the FMN-dependent alpha-hydroxy acid dehydrogenase family. FMN is required as a cofactor.

The protein resides in the cell inner membrane. The catalysed reaction is (S)-lactate + A = pyruvate + AH2. Catalyzes the conversion of L-lactate to pyruvate. Is coupled to the respiratory chain. The polypeptide is L-lactate dehydrogenase (Vibrio parahaemolyticus serotype O3:K6 (strain RIMD 2210633)).